Consider the following 309-residue polypeptide: PI-PLC X domain-containing protein 1 (309 aa).

The PI-PLC X-box domain occupies 17–193 (HMWDIPLWNL…QVILSYDDES (177 aa)).

The sequence is that of PI-PLC X domain-containing protein 1 (plcxd1) from Danio rerio (Zebrafish).